The following is a 160-amino-acid chain: CST complex subunit STN1 (160 aa).

The segment at residues 41-133 is a DNA-binding region (OB); that stretch reads VEIVGTIVSR…QITANVAVAE (93 aa).

It belongs to the STN1 family. In terms of assembly, component of the CST complex, composed of CTC1, TEN1 and STN1. Interacts with CTC1. Interacts with TEN1. Interacts with POT1A. In vitro interaction with TEN1 and POT1A is mutually exclusive, indicating that POT1A and TEN1 may compete for the same binding site. Widely expressed.

It is found in the nucleus. Its subcellular location is the chromosome. It localises to the telomere. Its function is as follows. Component of the CST complex, a complex that binds to single-stranded DNA and is required to protect telomeres from DNA degradation. The CST complex binds single-stranded DNA with high affinity in a sequence-independent manner, while isolated subunits bind DNA with low affinity by themselves. Associates with enzymatically active telomerase. Plays a genomewide role in DNA replication and facilitates re-replication at non-telomeric loci. This Arabidopsis thaliana (Mouse-ear cress) protein is CST complex subunit STN1.